Consider the following 595-residue polypeptide: Acriflavine sensitivity control protein acr-2 (595 aa).

The segment at residues Cys22 to Cys49 is a DNA-binding region (zn(2)-C6 fungal-type). The segment covering Thr69 to Thr88 has biased composition (low complexity). A disordered region spans residues Thr69–Gln172. The span at Val89 to Pro117 shows a compositional bias: polar residues. Residues Ser118–Thr138 are compositionally biased toward low complexity.

It localises to the nucleus. Its function is as follows. Probable transcriptional regulator. The protein is Acriflavine sensitivity control protein acr-2 (acr-2) of Neurospora crassa (strain ATCC 24698 / 74-OR23-1A / CBS 708.71 / DSM 1257 / FGSC 987).